We begin with the raw amino-acid sequence, 325 residues long: Collagen alpha-1(IX) chain (325 aa).

Residues 1 to 54 show a composition bias toward low complexity; sequence PGQLGNSGKPGQQGPPGEVGPRGPRGLPGSRGPVGPEGSPGIPGKLGPLGSPGL. Disordered regions lie at residues 1-163 and 187-325; these read PGQL…APTD and RPDT…GPDK. Positions 198-208 are enriched in pro residues; the sequence is RPGPPGPPGPP. Residues 237–249 are compositionally biased toward basic and acidic residues; sequence PKGDLGEKGERGP. Pro residues predominate over residues 292–304; it reads VPGPPGPPGPPGF.

The protein belongs to the fibril-associated collagens with interrupted helices (FACIT) family. Heterotrimer of an alpha 1(IX), an alpha 2(IX) and an alpha 3(IX) chain. Post-translationally, covalently linked to the telopeptides of type II collagen by lysine-derived cross-links. In terms of processing, prolines at the third position of the tripeptide repeating unit (G-X-Y) are hydroxylated in some or all of the chains.

It localises to the secreted. It is found in the extracellular space. The protein resides in the extracellular matrix. Functionally, structural component of hyaline cartilage and vitreous of the eye. The sequence is that of Collagen alpha-1(IX) chain (Col9a1) from Rattus norvegicus (Rat).